The sequence spans 262 residues: 3-methyl-2-oxobutanoate hydroxymethyltransferase (262 aa).

Residues aspartate 44 and aspartate 83 each coordinate Mg(2+). 3-methyl-2-oxobutanoate is bound by residues 44-45 (DS), aspartate 83, and lysine 112. Position 114 (glutamate 114) interacts with Mg(2+). The Proton acceptor role is filled by glutamate 177.

Belongs to the PanB family. In terms of assembly, homodecamer; pentamer of dimers. Mg(2+) serves as cofactor.

It is found in the cytoplasm. It carries out the reaction 3-methyl-2-oxobutanoate + (6R)-5,10-methylene-5,6,7,8-tetrahydrofolate + H2O = 2-dehydropantoate + (6S)-5,6,7,8-tetrahydrofolate. The protein operates within cofactor biosynthesis; coenzyme A biosynthesis. Catalyzes the reversible reaction in which hydroxymethyl group from 5,10-methylenetetrahydrofolate is transferred onto alpha-ketoisovalerate to form ketopantoate. This is 3-methyl-2-oxobutanoate hydroxymethyltransferase from Metallosphaera sedula (strain ATCC 51363 / DSM 5348 / JCM 9185 / NBRC 15509 / TH2).